We begin with the raw amino-acid sequence, 125 residues long: Protein Turandot F (125 aa).

The signal sequence occupies residues 1–19; the sequence is MKTVILFGFLLALLGYLEA.

Belongs to the Turandot family.

It is found in the secreted. Its function is as follows. A humoral factor that may play a role in stress tolerance. In Drosophila melanogaster (Fruit fly), this protein is Protein Turandot F.